A 209-amino-acid chain; its full sequence is Claudin-4 (209 aa).

Topologically, residues 1-9 are cytoplasmic; sequence MASMGLQVM. The tract at residues 1 to 103 is interaction with EPHA2; sequence MASMGLQVMG…GVLLSVVGGK (103 aa). The chain crosses the membrane as a helical span at residues 10–30; it reads GIALAVLGWLGAILSCALPMW. Topologically, residues 31 to 81 are extracellular; that stretch reads RVTAFIGSNIVTSQTIWEGLWMNCVVQSTGQMQCKVYDSLLALPQDLQAAR. A disulfide bridge connects residues Cys-54 and Cys-64. A helical membrane pass occupies residues 82–102; it reads ALIVICIILAVFGVLLSVVGG. Residues 103-117 are Cytoplasmic-facing; that stretch reads KCTNCVDDESSKAKI. A helical transmembrane segment spans residues 118–138; sequence MIVAGVVFLLAGLLVMVPVSW. The Extracellular portion of the chain corresponds to 139–160; that stretch reads TANNVIRDFYNPLVASGQKREM. Residues 161 to 181 traverse the membrane as a helical segment; that stretch reads GASLYVGWAAAGLLILGGALL. Residues 182 to 209 lie on the Cytoplasmic side of the membrane; sequence CFNCPPRNDKPYSAKYSAARSAPASNYV. Tyr-208 bears the Phosphotyrosine; by EPHA2 mark. Positions 208 to 209 are interactions with TJP1, TJP2 and TJP3; that stretch reads YV.

This sequence belongs to the claudin family. In terms of assembly, interacts with EPHA2; phosphorylates CLDN4 and may regulate tight junctions. Directly interacts with TJP1/ZO-1, TJP2/ZO-2 and TJP3/ZO-3. Interacts with CLDN1. Interacts with CLDN8. In terms of processing, phosphorylated. Phosphorylation by EPHA2 is stimulated by EFNA1 and alters interaction with TJP1.

Its subcellular location is the cell junction. It localises to the tight junction. The protein resides in the cell membrane. In terms of biological role, channel-forming tight junction protein that mediates paracellular chloride transport in the kidney. Plays a critical role in the paracellular reabsorption of filtered chloride in the kidney collecting ducts. Claudins play a major role in tight junction-specific obliteration of the intercellular space, through calcium-independent cell-adhesion activity. This Bos taurus (Bovine) protein is Claudin-4 (CLDN4).